The sequence spans 218 residues: Mediator of RNA polymerase II transcription subunit 20 (218 aa).

It belongs to the Mediator complex subunit 20 family. Component of the Mediator complex.

Its subcellular location is the nucleus. Functionally, component of the Mediator complex, a coactivator involved in the regulated transcription of nearly all RNA polymerase II-dependent genes. Mediator functions as a bridge to convey information from gene-specific regulatory proteins to the basal RNA polymerase II transcription machinery. Mediator is recruited to promoters by direct interactions with regulatory proteins and serves as a scaffold for the assembly of a functional preinitiation complex with RNA polymerase II and the general transcription factors. This is Mediator of RNA polymerase II transcription subunit 20 (MED20) from Anopheles gambiae (African malaria mosquito).